A 409-amino-acid chain; its full sequence is Argininosuccinate synthase (409 aa).

ATP contacts are provided by residues 11–19 and A38; that span reads AYSGGLDTS. L-citrulline-binding residues include Y91 and S96. G121 provides a ligand contact to ATP. Residues T123, N127, and D128 each coordinate L-aspartate. N127 contacts L-citrulline. L-citrulline is bound by residues R131, S182, S191, E267, and Y279.

This sequence belongs to the argininosuccinate synthase family. Type 1 subfamily. Homotetramer.

It localises to the cytoplasm. It carries out the reaction L-citrulline + L-aspartate + ATP = 2-(N(omega)-L-arginino)succinate + AMP + diphosphate + H(+). Its pathway is amino-acid biosynthesis; L-arginine biosynthesis; L-arginine from L-ornithine and carbamoyl phosphate: step 2/3. The polypeptide is Argininosuccinate synthase (Nitrobacter winogradskyi (strain ATCC 25391 / DSM 10237 / CIP 104748 / NCIMB 11846 / Nb-255)).